A 101-amino-acid polypeptide reads, in one-letter code: Citrate lyase acyl carrier protein (101 aa).

The residue at position 14 (S14) is an O-(phosphoribosyl dephospho-coenzyme A)serine.

It belongs to the CitD family. Oligomer with a subunit composition of (alpha,beta,gamma)6.

It is found in the cytoplasm. Functionally, covalent carrier of the coenzyme of citrate lyase. The chain is Citrate lyase acyl carrier protein from Latilactobacillus sakei subsp. sakei (strain 23K) (Lactobacillus sakei subsp. sakei).